Reading from the N-terminus, the 214-residue chain is Urease accessory protein UreG 2 (214 aa).

22-29 (GPVGSGKT) serves as a coordination point for GTP.

It belongs to the SIMIBI class G3E GTPase family. UreG subfamily. In terms of assembly, homodimer. UreD, UreF and UreG form a complex that acts as a GTP-hydrolysis-dependent molecular chaperone, activating the urease apoprotein by helping to assemble the nickel containing metallocenter of UreC. The UreE protein probably delivers the nickel.

It localises to the cytoplasm. Functionally, facilitates the functional incorporation of the urease nickel metallocenter. This process requires GTP hydrolysis, probably effectuated by UreG. This chain is Urease accessory protein UreG 2, found in Bradyrhizobium sp. (strain BTAi1 / ATCC BAA-1182).